Consider the following 843-residue polypeptide: Protein P (843 aa).

Residues 1 to 177 (MPLSYPHFRK…FCGSPYSWEQ (177 aa)) form a terminal protein domain (TP) region. The spacer stretch occupies residues 178 to 346 (ELQHGSTSLN…YCLSHIINLL (169 aa)). Disordered stretches follow at residues 228 to 259 (KQGQ…GVEP) and 283 to 314 (EKAN…SVGS). The span at 239-249 (RSGRLRSRVHT) shows a compositional bias: basic residues. Residues 347–690 (EDWGPCYEHG…YMNLYPVARQ (344 aa)) are polymerase/reverse transcriptase domain (RT). The Reverse transcriptase domain maps to 357 to 600 (QHYIRTPRTP…YSLHFMGYVI (244 aa)). Residues aspartate 429, aspartate 551, and aspartate 552 each coordinate Mg(2+).

This sequence belongs to the hepadnaviridae P protein family.

It catalyses the reaction DNA(n) + a 2'-deoxyribonucleoside 5'-triphosphate = DNA(n+1) + diphosphate. It carries out the reaction Endonucleolytic cleavage to 5'-phosphomonoester.. With respect to regulation, activated by host HSP70 and HSP40 in vitro to be able to bind the epsilon loop of the pgRNA. Because deletion of the RNase H region renders the protein partly chaperone-independent, the chaperones may be needed indirectly to relieve occlusion of the RNA-binding site by this domain. Inhibited by several reverse-transcriptase inhibitors: Lamivudine, Adefovir and Entecavir. In terms of biological role, multifunctional enzyme that converts the viral RNA genome into dsDNA in viral cytoplasmic capsids. This enzyme displays a DNA polymerase activity that can copy either DNA or RNA templates, and a ribonuclease H (RNase H) activity that cleaves the RNA strand of RNA-DNA heteroduplexes in a partially processive 3'- to 5'-endonucleasic mode. Neo-synthesized pregenomic RNA (pgRNA) are encapsidated together with the P protein, and reverse-transcribed inside the nucleocapsid. Initiation of reverse-transcription occurs first by binding the epsilon loop on the pgRNA genome, and is initiated by protein priming, thereby the 5'-end of (-)DNA is covalently linked to P protein. Partial (+)DNA is synthesized from the (-)DNA template and generates the relaxed circular DNA (RC-DNA) genome. After budding and infection, the RC-DNA migrates in the nucleus, and is converted into a plasmid-like covalently closed circular DNA (cccDNA). The activity of P protein does not seem to be necessary for cccDNA generation, and is presumably released from (+)DNA by host nuclear DNA repair machinery. This is Protein P from Homo sapiens (Human).